Consider the following 571-residue polypeptide: Methionine--tRNA ligase (571 aa).

Residues 10–20 (PYVNAVPHLGN) carry the 'HIGH' region motif. Cysteine 143, cysteine 146, cysteine 156, and cysteine 159 together coordinate Zn(2+). The 'KMSKS' region signature appears at 333–337 (KFSKS). Lysine 336 serves as a coordination point for ATP.

The protein belongs to the class-I aminoacyl-tRNA synthetase family. MetG type 1 subfamily. Zn(2+) serves as cofactor.

The protein resides in the cytoplasm. The enzyme catalyses tRNA(Met) + L-methionine + ATP = L-methionyl-tRNA(Met) + AMP + diphosphate. In terms of biological role, is required not only for elongation of protein synthesis but also for the initiation of all mRNA translation through initiator tRNA(fMet) aminoacylation. This Sulfolobus acidocaldarius (strain ATCC 33909 / DSM 639 / JCM 8929 / NBRC 15157 / NCIMB 11770) protein is Methionine--tRNA ligase.